The primary structure comprises 205 residues: CASP-like protein 0U1 (205 aa).

Topologically, residues 1-66 are cytoplasmic; that stretch reads MSGGDIDPTA…GYHKFAVFQF (66 aa). The MARVEL domain occupies 10-162; that stretch reads AINSPKFRLI…SMMFTWKEWR (153 aa). Residues 67–87 traverse the membrane as a helical segment; sequence LVVICVTYWLFTMLWMGMYLI. Residues 88–90 lie on the Extracellular side of the membrane; the sequence is QKV. The helical transmembrane segment at 91 to 111 threads the bilayer; sequence PPAGTEFMIYAVFNVLILIAF. Over 112 to 137 the chain is Cytoplasmic; the sequence is STSWTECNETIVDPTYPVCKRATGAK. Residues 138–158 traverse the membrane as a helical segment; it reads ASIAFAMFTWLALCVSMMFTW. The Extracellular segment spans residues 159–167; sequence KEWRDQNYE. Residues 168–188 traverse the membrane as a helical segment; it reads GLPIFGDFSSFMPGGGGGGMG. Over 189 to 205 the chain is Cytoplasmic; that stretch reads GGGGYERPSDVNTQTYA.

It belongs to the Casparian strip membrane proteins (CASP) family. As to quaternary structure, homodimer and heterodimers.

It is found in the cell membrane. The chain is CASP-like protein 0U1 from Micromonas pusilla (strain CCMP1545) (Picoplanktonic green alga).